A 325-amino-acid polypeptide reads, in one-letter code: Biotin synthase (325 aa).

The Radical SAM core domain maps to 46–270; it reads NNSNNIDLCS…IAICKLILPN (225 aa). The [4Fe-4S] cluster site is built by C64, C68, and C71. 4 residues coordinate [2Fe-2S] cluster: S107, C139, C198, and R274.

The protein belongs to the radical SAM superfamily. Biotin synthase family. As to quaternary structure, homodimer. It depends on [4Fe-4S] cluster as a cofactor. Requires [2Fe-2S] cluster as cofactor.

It carries out the reaction (4R,5S)-dethiobiotin + (sulfur carrier)-SH + 2 reduced [2Fe-2S]-[ferredoxin] + 2 S-adenosyl-L-methionine = (sulfur carrier)-H + biotin + 2 5'-deoxyadenosine + 2 L-methionine + 2 oxidized [2Fe-2S]-[ferredoxin]. It participates in cofactor biosynthesis; biotin biosynthesis; biotin from 7,8-diaminononanoate: step 2/2. In terms of biological role, catalyzes the conversion of dethiobiotin (DTB) to biotin by the insertion of a sulfur atom into dethiobiotin via a radical-based mechanism. The sequence is that of Biotin synthase from Methanococcus aeolicus (strain ATCC BAA-1280 / DSM 17508 / OCM 812 / Nankai-3).